Reading from the N-terminus, the 131-residue chain is Sec-independent protein translocase protein TatB (131 aa).

Residues 2-22 (FANIGWWEMLVLVMVGLVVLG) form a helical membrane-spanning segment. The tract at residues 90–131 (DSLFTGDFDRPTPKKPDAAGSAGPDATEQIGAGPIPFDSDAT) is disordered. Residues 96–106 (DFDRPTPKKPD) show a composition bias toward basic and acidic residues.

It belongs to the TatB family. In terms of assembly, the Tat system comprises two distinct complexes: a TatABC complex, containing multiple copies of TatA, TatB and TatC subunits, and a separate TatA complex, containing only TatA subunits. Substrates initially bind to the TatABC complex, which probably triggers association of the separate TatA complex to form the active translocon.

Its subcellular location is the cell membrane. Its function is as follows. Part of the twin-arginine translocation (Tat) system that transports large folded proteins containing a characteristic twin-arginine motif in their signal peptide across membranes. Together with TatC, TatB is part of a receptor directly interacting with Tat signal peptides. TatB may form an oligomeric binding site that transiently accommodates folded Tat precursor proteins before their translocation. This chain is Sec-independent protein translocase protein TatB, found in Mycobacterium tuberculosis (strain ATCC 25177 / H37Ra).